The chain runs to 38 residues: MKVRPSVRRICEKCRVIRRHGRVMVICSSNPKHKQRQG.

The protein belongs to the bacterial ribosomal protein bL36 family.

This is Large ribosomal subunit protein bL36 from Synechococcus sp. (strain JA-2-3B'a(2-13)) (Cyanobacteria bacterium Yellowstone B-Prime).